Here is a 299-residue protein sequence, read N- to C-terminus: MKPDAHQVKQFLLNLQDTICQQLSAVDGAEFVEDSWQREAGGGGRSRVLRNGGVFEQAGVNFSHVHGEAMPASATAHRPELAGRSFEAMGISLVVHPHNPYVPTSHANVRFFIAEKPGAEPVWWFGGGFDLTPFYGFEEDAIHWHRTARDLCQPFGEDVYPRYKKWCDEYFYLKHRNEQRGIGGLFFDDLNTPDFDHCFAFMQAVGKGYTNAYLPIVERRKAMAYGERERNFQLYRRGRYVEFNLVWDRGTLFGLQTGGRTESILMSMPPLVRWEYDYHPEDGSPEAALSEFIKVRDWV.

Ser-92 contacts substrate. Positions 96 and 106 each coordinate Mn(2+). His-106 serves as the catalytic Proton donor. Substrate is bound at residue 108 to 110 (NVR). Mn(2+)-binding residues include His-145 and His-175. The interval 240–275 (YVEFNLVWDRGTLFGLQTGGRTESILMSMPPLVRWE) is important for dimerization. Position 258–260 (258–260 (GGR)) interacts with substrate.

Belongs to the aerobic coproporphyrinogen-III oxidase family. In terms of assembly, homodimer. It depends on Mn(2+) as a cofactor.

The protein resides in the cytoplasm. The catalysed reaction is coproporphyrinogen III + O2 + 2 H(+) = protoporphyrinogen IX + 2 CO2 + 2 H2O. It functions in the pathway porphyrin-containing compound metabolism; protoporphyrin-IX biosynthesis; protoporphyrinogen-IX from coproporphyrinogen-III (O2 route): step 1/1. In terms of biological role, involved in the heme biosynthesis. Catalyzes the aerobic oxidative decarboxylation of propionate groups of rings A and B of coproporphyrinogen-III to yield the vinyl groups in protoporphyrinogen-IX. This chain is Oxygen-dependent coproporphyrinogen-III oxidase, found in Escherichia coli O17:K52:H18 (strain UMN026 / ExPEC).